The primary structure comprises 485 residues: Protein nucleotidyltransferase YdiU (485 aa).

ATP-binding residues include glycine 100, glycine 102, arginine 103, lysine 123, aspartate 135, glycine 136, arginine 189, and arginine 196. Aspartate 265 (proton acceptor) is an active-site residue. Residues asparagine 266 and aspartate 275 each coordinate Mg(2+). ATP is bound at residue aspartate 275.

This sequence belongs to the SELO family. Mg(2+) is required as a cofactor. It depends on Mn(2+) as a cofactor.

The enzyme catalyses L-seryl-[protein] + ATP = 3-O-(5'-adenylyl)-L-seryl-[protein] + diphosphate. It carries out the reaction L-threonyl-[protein] + ATP = 3-O-(5'-adenylyl)-L-threonyl-[protein] + diphosphate. The catalysed reaction is L-tyrosyl-[protein] + ATP = O-(5'-adenylyl)-L-tyrosyl-[protein] + diphosphate. It catalyses the reaction L-histidyl-[protein] + UTP = N(tele)-(5'-uridylyl)-L-histidyl-[protein] + diphosphate. The enzyme catalyses L-seryl-[protein] + UTP = O-(5'-uridylyl)-L-seryl-[protein] + diphosphate. It carries out the reaction L-tyrosyl-[protein] + UTP = O-(5'-uridylyl)-L-tyrosyl-[protein] + diphosphate. Functionally, nucleotidyltransferase involved in the post-translational modification of proteins. It can catalyze the addition of adenosine monophosphate (AMP) or uridine monophosphate (UMP) to a protein, resulting in modifications known as AMPylation and UMPylation. The chain is Protein nucleotidyltransferase YdiU from Trichormus variabilis (strain ATCC 29413 / PCC 7937) (Anabaena variabilis).